Reading from the N-terminus, the 351-residue chain is Glycerol-1-phosphate dehydrogenase [NAD(P)+] (351 aa).

Residues 98-102 (GSIID) and 120-123 (TTAS) each bind NAD(+). Asp-125 lines the substrate pocket. Ser-129 is an NAD(+) binding site. Asp-172 contributes to the substrate binding site. 2 residues coordinate Zn(2+): Asp-172 and His-252. His-256 contributes to the substrate binding site. His-268 contributes to the Zn(2+) binding site.

The protein belongs to the glycerol-1-phosphate dehydrogenase family. The cofactor is Zn(2+).

It is found in the cytoplasm. The catalysed reaction is sn-glycerol 1-phosphate + NAD(+) = dihydroxyacetone phosphate + NADH + H(+). It catalyses the reaction sn-glycerol 1-phosphate + NADP(+) = dihydroxyacetone phosphate + NADPH + H(+). It functions in the pathway membrane lipid metabolism; glycerophospholipid metabolism. In terms of biological role, catalyzes the NAD(P)H-dependent reduction of dihydroxyacetonephosphate (DHAP or glycerone phosphate) to glycerol 1-phosphate (G1P). The G1P thus generated is used as the glycerophosphate backbone of phospholipids in the cellular membranes of Archaea. The polypeptide is Glycerol-1-phosphate dehydrogenase [NAD(P)+] (Thermococcus kodakarensis (strain ATCC BAA-918 / JCM 12380 / KOD1) (Pyrococcus kodakaraensis (strain KOD1))).